The primary structure comprises 320 residues: uncharacterized protein (320 aa).

Interacts with VP1054, VP39 and VP80.

Its subcellular location is the virion. The protein resides in the host nucleus. The protein localises to the host cytoplasm. Plays a role in nucleocapsid assembly and is essential for viral replication. Distributed over the cylindrical capsid sheath of nucleocapsid. This is an uncharacterized protein from Lepidoptera (butterflies and moths).